Here is a 278-residue protein sequence, read N- to C-terminus: MAEELVQSEKLLSLDPKLQEDFQQKVHDIRRKRKANALTPGVIYIGHIPKSLIEPQLQEYFNQFGTVTRLRLSRSKKTGNSKGYAYVEYECDEVAKIVADTMNNYLFCERLLKCEFVTPEKVHPRLFIGCNTRFRKPTKPAVTRYNSKRNKEEVKKMTQRMISKEYKLRKRLAEKGIDYDFPGFAAHREMRKELTCDANTSVSSQDPTPVCTPTVLERRKSVRLEQIEDEEEDDDEVVLKLPQRDDEVVVKLPQKVSSAAKRQKISKLGKKTNIKELK.

An RRM domain is found at G41–P119.

The protein resides in the nucleus. It is found in the nucleolus. This chain is MKI67 FHA domain-interacting nucleolar phosphoprotein-like (nifk), found in Xenopus laevis (African clawed frog).